The sequence spans 567 residues: Geranylgeranyl transferase type-2 subunit alpha (567 aa).

PFTA repeat units lie at residues 44-78, 88-122, 124-158, 159-193, 207-241, and 363-397; these read LDES…QLET, LVKA…RLPE, NWTR…QAAV, PPAE…QLHP, VLLK…RADP, and VLQS…ALDP. A Phosphoserine modification is found at Ser-98. LRR repeat units lie at residues 442-463, 464-486, 487-508, 509-530, and 534-555; these read EVRV…EQLL, LVTH…AALR, CLEV…TNLP, RLQE…QPLA, and RLVL…LEQL.

It belongs to the protein prenyltransferase subunit alpha family. Heterotrimer composed of RABGGTA, RABGGTB and CHM; within this trimer, RABGGTA and RABGGTB form the catalytic component B, while CHM (component A) mediates peptide substrate binding. The Rab GGTase dimer (RGGT) interacts with CHM (component A) prior to Rab protein binding; the association is stabilized by geranylgeranyl pyrophosphate (GGpp). The CHM:RGGT:Rab complex is destabilized by GGpp. Interacts with non-phosphorylated form of RAB8A; phosphorylation of RAB8A at 'Thr-72' disrupts this interaction.

It carries out the reaction geranylgeranyl diphosphate + L-cysteinyl-[protein] = S-geranylgeranyl-L-cysteinyl-[protein] + diphosphate. Its activity is regulated as follows. The enzymatic reaction requires the aid of a Rab escort protein (also called component A), such as CHM. In terms of biological role, catalyzes the transfer of a geranylgeranyl moiety from geranylgeranyl diphosphate to both cysteines of Rab proteins with the C-terminal sequence -XXCC, -XCXC and -CCXX, such as RAB1A, RAB3A, RAB5A and RAB7A. The chain is Geranylgeranyl transferase type-2 subunit alpha (RABGGTA) from Pongo abelii (Sumatran orangutan).